Reading from the N-terminus, the 80-residue chain is Protein pegasus (80 aa).

The first 22 residues, 1 to 22 (MKLSAVLLAIALLALSLVQCLG), serve as a signal peptide directing secretion. The Kazal-like domain maps to 24-80 (PDPSTKCVMECDTQEYRSICAADDKGSTKTYRNLCVMKTENCLQNANFQKISDKECP). 3 cysteine pairs are disulfide-bonded: Cys-30/Cys-65, Cys-34/Cys-58, and Cys-43/Cys-79.

As to quaternary structure, interacts with wg; the interaction facilitates short-range diffusion of wg. As to expression, strongly expressed in the developing fly wing but is excluded from the presumptive wing margin.

Its subcellular location is the secreted. In terms of biological role, increases short-range diffusion of the wingless/wg protein, enhancing its signaling and expression of target genes required for wing margin morphogenesis. May act as a serine protease inhibitor since it possess the Kazal serine protease inhibitor signature. The protein is Protein pegasus of Drosophila melanogaster (Fruit fly).